The following is a 212-amino-acid chain: Peptide methionine sulfoxide reductase MsrA (212 aa).

Cysteine 52 is a catalytic residue.

The protein belongs to the MsrA Met sulfoxide reductase family.

The enzyme catalyses L-methionyl-[protein] + [thioredoxin]-disulfide + H2O = L-methionyl-(S)-S-oxide-[protein] + [thioredoxin]-dithiol. The catalysed reaction is [thioredoxin]-disulfide + L-methionine + H2O = L-methionine (S)-S-oxide + [thioredoxin]-dithiol. Its function is as follows. Has an important function as a repair enzyme for proteins that have been inactivated by oxidation. Catalyzes the reversible oxidation-reduction of methionine sulfoxide in proteins to methionine. This is Peptide methionine sulfoxide reductase MsrA from Shigella dysenteriae serotype 1 (strain Sd197).